A 318-amino-acid chain; its full sequence is 4-diphosphocytidyl-2-C-methyl-D-erythritol kinase (318 aa).

Lys-13 is a catalytic residue. Residue 101 to 111 (PVAGGMAGGSA) participates in ATP binding. The active site involves Asp-143. Residues 298–318 (PGARLVTDDRADRPTPPQVHA) form a disordered region.

Belongs to the GHMP kinase family. IspE subfamily.

It carries out the reaction 4-CDP-2-C-methyl-D-erythritol + ATP = 4-CDP-2-C-methyl-D-erythritol 2-phosphate + ADP + H(+). It participates in isoprenoid biosynthesis; isopentenyl diphosphate biosynthesis via DXP pathway; isopentenyl diphosphate from 1-deoxy-D-xylulose 5-phosphate: step 3/6. In terms of biological role, catalyzes the phosphorylation of the position 2 hydroxy group of 4-diphosphocytidyl-2C-methyl-D-erythritol. The sequence is that of 4-diphosphocytidyl-2-C-methyl-D-erythritol kinase from Saccharopolyspora erythraea (strain ATCC 11635 / DSM 40517 / JCM 4748 / NBRC 13426 / NCIMB 8594 / NRRL 2338).